The sequence spans 106 residues: UPF0642 protein YBL028C (106 aa).

Residues 1-12 show a composition bias toward polar residues; it reads MAKSLRASSHLN. Disordered stretches follow at residues 1-21 and 52-106; these read MAKSLRASSHLNAKSVKRRGV and KEEQ…FTRF. Residues 62–72 show a composition bias toward basic and acidic residues; sequence DEKKSNEEAPR. The span at 83–106 shows a compositional bias: basic residues; that stretch reads GRHHTYKKAKLMKQSKKKTSFTRF.

It belongs to the UPF0642 family.

The chain is UPF0642 protein YBL028C from Saccharomyces cerevisiae (strain ATCC 204508 / S288c) (Baker's yeast).